The sequence spans 325 residues: Protein FAM50B (325 aa).

The residue at position 2 (A2) is an N-acetylalanine. Residues 137-160 (RRAGNLGKNPDVDTSFLPDRDREE) form a disordered region.

It belongs to the FAM50 family.

The protein is Protein FAM50B (FAM50B) of Macaca fascicularis (Crab-eating macaque).